The sequence spans 183 residues: MEENIVNILKSIGEDPTREGLLNTPKRVKKAYDFLTSGYHVDITKVVNGAIFEESTEGMILVRDIEVYSLCEHHLLPFYGRAHVAYLPNKKIIGISKIPRIVDVFARRLQVQERLTEQIAYAVQEVLDPQGVAVVIKAKHLCMMMRGVEKQNSELFTSCLLGAFKENMVTRSEFLDLIRTGST.

Zn(2+) contacts are provided by Cys-71, His-74, and Cys-142.

It belongs to the GTP cyclohydrolase I family. Toroid-shaped homodecamer, composed of two pentamers of five dimers.

The enzyme catalyses GTP + H2O = 7,8-dihydroneopterin 3'-triphosphate + formate + H(+). The protein operates within cofactor biosynthesis; 7,8-dihydroneopterin triphosphate biosynthesis; 7,8-dihydroneopterin triphosphate from GTP: step 1/1. The polypeptide is GTP cyclohydrolase 1 (Leptospira borgpetersenii serovar Hardjo-bovis (strain JB197)).